The following is a 504-amino-acid chain: D-alanine--D-alanyl carrier protein ligase (504 aa).

152-153 (TS) lines the ATP pocket. D197 is a binding site for D-alanine. Position 292 to 297 (292 to 297 (NTYGPT)) interacts with ATP. V301 contributes to the D-alanine binding site. ATP is bound by residues D383, 394-397 (YNGR), and K492. A D-alanine-binding site is contributed by K492.

The protein belongs to the ATP-dependent AMP-binding enzyme family. DltA subfamily.

It is found in the cytoplasm. The catalysed reaction is holo-[D-alanyl-carrier protein] + D-alanine + ATP = D-alanyl-[D-alanyl-carrier protein] + AMP + diphosphate. The protein operates within cell wall biogenesis; lipoteichoic acid biosynthesis. Catalyzes the first step in the D-alanylation of lipoteichoic acid (LTA), the activation of D-alanine and its transfer onto the D-alanyl carrier protein (Dcp) DltC. In an ATP-dependent two-step reaction, forms a high energy D-alanyl-AMP intermediate, followed by transfer of the D-alanyl residue as a thiol ester to the phosphopantheinyl prosthetic group of the Dcp. D-alanylation of LTA plays an important role in modulating the properties of the cell wall in Gram-positive bacteria, influencing the net charge of the cell wall. This Bacillus cereus (strain G9842) protein is D-alanine--D-alanyl carrier protein ligase.